Consider the following 194-residue polypeptide: tRNA(Phe) 7-((3-amino-3-carboxypropyl)-4-demethylwyosine(37)-N(4))-methyltransferase 1 (194 aa).

Belongs to the TYW3 family.

It catalyses the reaction 4-demethyl-7-[(3S)-3-amino-3-carboxypropyl]wyosine(37) in tRNA(Phe) + S-adenosyl-L-methionine = 7-[(3S)-3-amino-3-carboxypropyl]wyosine(37) in tRNA(Phe) + S-adenosyl-L-homocysteine + H(+). Functionally, S-adenosyl-L-methionine-dependent methyltransferase that acts as a component of the wyosine derivatives biosynthesis pathway. Probably methylates N-4 position of wybutosine-86 to produce wybutosine-72. The polypeptide is tRNA(Phe) 7-((3-amino-3-carboxypropyl)-4-demethylwyosine(37)-N(4))-methyltransferase 1 (Pyrococcus abyssi (strain GE5 / Orsay)).